Reading from the N-terminus, the 269-residue chain is Thiazole synthase (269 aa).

Catalysis depends on K105, which acts as the Schiff-base intermediate with DXP. 1-deoxy-D-xylulose 5-phosphate contacts are provided by residues G166, 192 to 193 (AG), and 214 to 215 (NT). Residues 245-269 (AMSAQDAAQPSTPVLGTPFWHHDHG) are disordered.

Belongs to the ThiG family. In terms of assembly, homotetramer. Forms heterodimers with either ThiH or ThiS.

It is found in the cytoplasm. It catalyses the reaction [ThiS sulfur-carrier protein]-C-terminal-Gly-aminoethanethioate + 2-iminoacetate + 1-deoxy-D-xylulose 5-phosphate = [ThiS sulfur-carrier protein]-C-terminal Gly-Gly + 2-[(2R,5Z)-2-carboxy-4-methylthiazol-5(2H)-ylidene]ethyl phosphate + 2 H2O + H(+). The protein operates within cofactor biosynthesis; thiamine diphosphate biosynthesis. Catalyzes the rearrangement of 1-deoxy-D-xylulose 5-phosphate (DXP) to produce the thiazole phosphate moiety of thiamine. Sulfur is provided by the thiocarboxylate moiety of the carrier protein ThiS. In vitro, sulfur can be provided by H(2)S. The sequence is that of Thiazole synthase from Paracidovorax citrulli (strain AAC00-1) (Acidovorax citrulli).